A 233-amino-acid chain; its full sequence is 28 kDa ribonucleoprotein, chloroplastic (233 aa).

The span at cysteine 1–alanine 16 shows a compositional bias: polar residues. The disordered stretch occupies residues cysteine 1–proline 52. RRM domains lie at alanine 55–proline 133 and cysteine 149–glutamate 227.

The protein localises to the plastid. Its subcellular location is the chloroplast. Probably involved in the 3'-end processing of chloroplast mRNA's. This is 28 kDa ribonucleoprotein, chloroplastic from Spinacia oleracea (Spinach).